The chain runs to 340 residues: Anthranilate phosphoribosyltransferase (340 aa).

Residues Gly80, 83-84, Thr88, 90-93, 108-116, and Ser120 each bind 5-phospho-alpha-D-ribose 1-diphosphate; these read GD, NIST, and KHGNRAMSS. Gly80 serves as a coordination point for anthranilate. Ser92 serves as a coordination point for Mg(2+). Anthranilate is bound at residue Asn111. Arg166 serves as a coordination point for anthranilate. Positions 225 and 226 each coordinate Mg(2+).

The protein belongs to the anthranilate phosphoribosyltransferase family. In terms of assembly, homodimer. Mg(2+) serves as cofactor.

It carries out the reaction N-(5-phospho-beta-D-ribosyl)anthranilate + diphosphate = 5-phospho-alpha-D-ribose 1-diphosphate + anthranilate. It participates in amino-acid biosynthesis; L-tryptophan biosynthesis; L-tryptophan from chorismate: step 2/5. Functionally, catalyzes the transfer of the phosphoribosyl group of 5-phosphorylribose-1-pyrophosphate (PRPP) to anthranilate to yield N-(5'-phosphoribosyl)-anthranilate (PRA). The chain is Anthranilate phosphoribosyltransferase from Roseiflexus castenholzii (strain DSM 13941 / HLO8).